A 3419-amino-acid polypeptide reads, in one-letter code: Utrophin (3419 aa).

The actin-binding stretch occupies residues Met-1 to Tyr-246. Phosphotyrosine is present on Tyr-4. Ser-10 is subject to Phosphoserine. 2 Calponin-homology (CH) domains span residues Asp-31–Gln-135 and Thr-150–Pro-255. Residues Thr-268 to Lys-905 are interaction with SYNM. At Ser-295 the chain carries Phosphoserine. Spectrin repeat units lie at residues Asp-312 to His-416, Glu-421 to Gln-525, Gln-532 to Thr-636, Lys-690 to Gln-795, Asn-801 to Glu-901, Pro-910 to Glu-1012, Arg-1019 to Ser-1121, Met-1128 to Glu-1229, Val-1236 to Glu-1333, Gln-1335 to Lys-1436, Ala-1438 to Glu-1540, Arg-1547 to Leu-1648, Gln-1653 to Ala-1747, Gln-1748 to Ala-1840, Ile-1841 to Arg-1958, Lys-1969 to Lys-2070, and Ser-2077 to Thr-2176. The segment at Leu-1336 to Ala-1761 is interaction with SYNM. Ser-1998 is modified (phosphoserine). Position 2201 is a phosphoserine (Ser-2201). Spectrin repeat units lie at residues Ala-2216–Glu-2319, Glu-2336–Glu-2426, Gln-2433–Glu-2542, Asn-2549–Gly-2674, and Arg-2681–Gln-2783. The segment at Asp-2616 to Arg-2640 is disordered. Residues Ala-2785 to Thr-3152 are interaction with SYNM. Residues Thr-2799–Met-2832 form the WW domain. Residues Lys-3052–Thr-3108 form a ZZ-type; degenerate zinc finger. 4 residues coordinate Zn(2+): Cys-3057, Cys-3060, Cys-3081, and Cys-3084. Disordered stretches follow at residues Arg-3277–Ser-3296 and Asp-3344–Thr-3395. Ser-3284 carries the phosphoserine modification.

Homodimer. Interacts with the syntrophins SNTA1; SNTB1 and SNTB2. Interacts with SYNM. Interacts (via its WWW and ZZ domains) with DAG1 (via the PPXY motif of betaDAG1); the interaction is inhibited by the tyrosine phosphorylation of the PPXY motif of DAG1. Interacts with DTNB. Interacts with PGM5.

It is found in the postsynaptic cell membrane. Its subcellular location is the cytoplasm. The protein resides in the cytoskeleton. In terms of biological role, may play a role in anchoring the cytoskeleton to the plasma membrane. In Rattus norvegicus (Rat), this protein is Utrophin.